A 140-amino-acid chain; its full sequence is Large ribosomal subunit protein uL14 (140 aa).

A Phosphoserine modification is found at serine 17. Tyrosine 38 bears the Phosphotyrosine mark.

It belongs to the universal ribosomal protein uL14 family. In terms of assembly, component of the large ribosomal subunit.

It localises to the cytoplasm. Component of the large ribosomal subunit. The ribosome is a large ribonucleoprotein complex responsible for the synthesis of proteins in the cell. In Canis lupus familiaris (Dog), this protein is Large ribosomal subunit protein uL14 (RPL23).